A 399-amino-acid polypeptide reads, in one-letter code: Phosphoglycerate kinase (399 aa).

Substrate-binding positions include 22–24 (DFN), R38, 61–64 (HLGR), R120, and R153. Residues K204, E326, and 352–355 (GGDT) each bind ATP.

The protein belongs to the phosphoglycerate kinase family. Monomer.

It is found in the cytoplasm. It carries out the reaction (2R)-3-phosphoglycerate + ATP = (2R)-3-phospho-glyceroyl phosphate + ADP. Its pathway is carbohydrate degradation; glycolysis; pyruvate from D-glyceraldehyde 3-phosphate: step 2/5. This Geobacter sp. (strain M21) protein is Phosphoglycerate kinase.